The chain runs to 445 residues: GTPase Der (445 aa).

2 consecutive EngA-type G domains span residues 3 to 167 and 180 to 353; these read PVIA…YAGQ and IKIA…AAAM. GTP-binding positions include 9-16, 56-60, 119-122, 186-193, 233-237, and 298-301; these read GRPNVGKS, DTGGF, NKAE, DTAGL, and NKWD. A KH-like domain is found at 354-438; that stretch reads AKLPTPKLTR…PLRIEFRSSN (85 aa).

Belongs to the TRAFAC class TrmE-Era-EngA-EngB-Septin-like GTPase superfamily. EngA (Der) GTPase family. In terms of assembly, associates with the 50S ribosomal subunit.

Its function is as follows. GTPase that plays an essential role in the late steps of ribosome biogenesis. This is GTPase Der from Burkholderia ambifaria (strain ATCC BAA-244 / DSM 16087 / CCUG 44356 / LMG 19182 / AMMD) (Burkholderia cepacia (strain AMMD)).